The sequence spans 831 residues: AdoMet-dependent rRNA methyltransferase SPB1 (831 aa).

Residues Gly58, Trp60, Asp78, Asp94, and Asp119 each coordinate S-adenosyl-L-methionine. The active-site Proton acceptor is the Lys159. Coiled coils occupy residues 346–389 (LTED…QMNM) and 440–479 (NDINFDEEADANSEDEIDELEAQLDDMYNSYQNRRAERDA). 2 disordered regions span residues 492–535 (DEGW…ADQR) and 565–645 (MNKK…DQQS). Positions 499-510 (ESDKEGSDKETE) are enriched in basic and acidic residues. Composition is skewed to acidic residues over residues 511-526 (ANDYEMESESDSDDDE), 594-611 (MEVDSSDSENDVSDDSDF), and 618-631 (PDEELSDSDSDNEN). A compositionally biased stretch (basic and acidic residues) spans 632 to 645 (DVSRKYSKAKDQQS). Residues 729-782 (LEAQGRKKLRALKRLEKLKKKSDMINEDSAKSERDKADEIQKLMKKLTKKQKTK) are a coiled coil.

This sequence belongs to the class I-like SAM-binding methyltransferase superfamily. RNA methyltransferase RlmE family. SPB1 subfamily. As to quaternary structure, component of the nucleolar and nucleoplasmic pre-60S ribosomal particle.

The protein resides in the nucleus. Its subcellular location is the nucleolus. It carries out the reaction a ribonucleotide in rRNA + S-adenosyl-L-methionine = a 2'-O-methylribonucleotide in rRNA + S-adenosyl-L-homocysteine + H(+). Required for proper assembly of pre-ribosomal particles during the biogenesis of the 60S ribosomal subunit. The sequence is that of AdoMet-dependent rRNA methyltransferase SPB1 from Debaryomyces hansenii (strain ATCC 36239 / CBS 767 / BCRC 21394 / JCM 1990 / NBRC 0083 / IGC 2968) (Yeast).